The primary structure comprises 504 residues: L-carnitine/gamma-butyrobetaine antiporter (504 aa).

The next 12 membrane-spanning stretches (helical) occupy residues 10 to 30 (IEPKVFFPPLIIVGILCWLTV), 51 to 71 (WGWAFEWYMVVMLFGWFWLVF), 92 to 112 (IFMMFASCTSAAVLFWGSIEI), 143 to 163 (GPLPWATYSFLSVAFAYFFFV), 195 to 215 (FYLVALIFAMGTSLGLATPLV), 231 to 251 (LDAIIITCWIILNTICVACGL), 263 to 283 (SYLSFLMLGWVFIVSGASFIM), 316 to 336 (WTVFYWAWWVIYAIQMSIFLA), 347 to 367 (LCFGMVLGLTASTWILWTVLG), 398 to 418 (WAALPLSTATMWGFFILCFIA), 446 to 466 (LLVRIGWSVLVGIIGIVLLAL), and 475 to 495 (AIIAGGCPLFFVNIMVTLSFI).

It belongs to the BCCT transporter (TC 2.A.15) family. CaiT subfamily. Homotrimer.

The protein localises to the cell inner membrane. It catalyses the reaction 4-(trimethylamino)butanoate(in) + (R)-carnitine(out) = 4-(trimethylamino)butanoate(out) + (R)-carnitine(in). It participates in amine and polyamine metabolism; carnitine metabolism. Catalyzes the exchange of L-carnitine for gamma-butyrobetaine. The protein is L-carnitine/gamma-butyrobetaine antiporter of Escherichia coli O81 (strain ED1a).